The primary structure comprises 301 residues: Nucleotide-binding protein Mb1456 (301 aa).

Position 24–31 (glycine 24–glycine 31) interacts with ATP. Aspartate 75–serine 78 is a binding site for GTP.

The protein belongs to the RapZ-like family.

Displays ATPase and GTPase activities. The chain is Nucleotide-binding protein Mb1456 from Mycobacterium bovis (strain ATCC BAA-935 / AF2122/97).